The sequence spans 450 residues: tRNA modification GTPase MnmE (450 aa).

The (6S)-5-formyl-5,6,7,8-tetrahydrofolate site is built by Arg21, Glu80, and Lys119. In terms of domain architecture, TrmE-type G spans 213–373 (GIKVVIIGKP…LEEEIIKSVK (161 aa)). A K(+)-binding site is contributed by Asn223. Residues 223–228 (NVGKST), 242–248 (TDIPGTT), and 267–270 (DTAG) contribute to the GTP site. Ser227 is a binding site for Mg(2+). The K(+) site is built by Thr242, Ile244, and Thr247. Thr248 lines the Mg(2+) pocket. (6S)-5-formyl-5,6,7,8-tetrahydrofolate is bound at residue Lys450.

Belongs to the TRAFAC class TrmE-Era-EngA-EngB-Septin-like GTPase superfamily. TrmE GTPase family. In terms of assembly, homodimer. Heterotetramer of two MnmE and two MnmG subunits. Requires K(+) as cofactor.

Its subcellular location is the cytoplasm. In terms of biological role, exhibits a very high intrinsic GTPase hydrolysis rate. Involved in the addition of a carboxymethylaminomethyl (cmnm) group at the wobble position (U34) of certain tRNAs, forming tRNA-cmnm(5)s(2)U34. The chain is tRNA modification GTPase MnmE from Pseudothermotoga lettingae (strain ATCC BAA-301 / DSM 14385 / NBRC 107922 / TMO) (Thermotoga lettingae).